A 415-amino-acid chain; its full sequence is Multidrug resistance protein MdtA (415 aa).

Residues 1–21 form the signal peptide; that stretch reads MKGSYKSRWVIVIVVVIAAIA. Over residues 31-46 the composition is skewed to polar residues; that stretch reads DSQSAAPGATKQAQQS. Disordered stretches follow at residues 31-56 and 392-415; these read DSQS…GMRA and EAQS…GARS. A compositionally biased stretch (basic and acidic residues) spans 399-415; sequence PEEKATSREYAKKGARS.

This sequence belongs to the membrane fusion protein (MFP) (TC 8.A.1) family. Part of a tripartite efflux system composed of MdtA, MdtB and MdtC.

The protein resides in the cell inner membrane. In terms of biological role, the MdtABC tripartite complex confers resistance against novobiocin and deoxycholate. The sequence is that of Multidrug resistance protein MdtA from Escherichia coli O6:K15:H31 (strain 536 / UPEC).